We begin with the raw amino-acid sequence, 199 residues long: Prefoldin subunit 3 (199 aa).

Position 1 is an N-acetylmethionine (Met-1).

The protein belongs to the prefoldin subunit alpha family. As to quaternary structure, heterohexamer of two PFD-alpha type and four PFD-beta type subunits.

Functionally, binds specifically to cytosolic chaperonin (c-CPN) and transfers target proteins to it. Binds to nascent polypeptide chain and promotes folding in an environment in which there are many competing pathways for nonnative proteins. The protein is Prefoldin subunit 3 (PAC10) of Saccharomyces cerevisiae (strain ATCC 204508 / S288c) (Baker's yeast).